The chain runs to 793 residues: Phenylalanine--tRNA ligase beta subunit (793 aa).

A tRNA-binding domain is found at 39-154 (TCSFSSIITA…ENTPLGESAC (116 aa)). The B5 domain maps to 403–481 (PQASTLSFRT…QPWKVENKKA (79 aa)). Residues Asp457, Asp463, Glu466, and Glu467 each contribute to the Mg(2+) site. The FDX-ACB domain maps to 697-793 (PIYPSSFRDI…QINDTKGTID (97 aa)).

Belongs to the phenylalanyl-tRNA synthetase beta subunit family. Type 1 subfamily. As to quaternary structure, tetramer of two alpha and two beta subunits. The cofactor is Mg(2+).

It localises to the cytoplasm. The catalysed reaction is tRNA(Phe) + L-phenylalanine + ATP = L-phenylalanyl-tRNA(Phe) + AMP + diphosphate + H(+). This is Phenylalanine--tRNA ligase beta subunit from Chlamydia caviae (strain ATCC VR-813 / DSM 19441 / 03DC25 / GPIC) (Chlamydophila caviae).